Here is a 317-residue protein sequence, read N- to C-terminus: Gamma-glutamyl hydrolase (317 aa).

The signal sequence occupies residues 1-24; that stretch reads MANLGYLLCLLGLLLCGLSSPGMS. Residues 25 to 317 form the Gamma-glutamyl hydrolase domain; it reads RPYNHGSERP…SSFQQAYMFD (293 aa). N-linked (GlcNAc...) (high mannose) asparagine glycosylation is present at Asn-100. Residue Cys-133 is the Nucleophile of the active site. 2 N-linked (GlcNAc...) (high mannose) asparagine glycosylation sites follow: Asn-162 and Asn-188. The N-linked (GlcNAc...) asparagine glycan is linked to Asn-202. Catalysis depends on His-243, which acts as the Proton donor. Asn-306 is a glycosylation site (N-linked (GlcNAc...) asparagine).

The protein belongs to the peptidase C26 family. Homodimer. Isoform I (more expressed than isoform II in all tissues) is highly expressed in salivary gland, followed by kidney, liver, lung, stomach and uterus, and weakly expressed in small intestine, brain and fetal liver. Also expressed at a lower level in thymus, spleen and skeletal muscle. Also expressed in tumors.

The protein localises to the secreted. It is found in the extracellular space. Its subcellular location is the lysosome. It localises to the melanosome. It carries out the reaction (6S)-5,6,7,8-tetrahydrofolyl-(gamma-L-Glu)(n) + (n-1) H2O = (6S)-5,6,7,8-tetrahydrofolate + (n-1) L-glutamate. Hydrolyzes the polyglutamate sidechains of pteroylpolyglutamates. Progressively removes gamma-glutamyl residues from pteroylpoly-gamma-glutamate to yield pteroyl-alpha-glutamate (folic acid) and free glutamate. May play an important role in the bioavailability of dietary pteroylpolyglutamates and in the metabolism of pteroylpolyglutamates and antifolates. This Mus musculus (Mouse) protein is Gamma-glutamyl hydrolase (Ggh).